Here is a 113-residue protein sequence, read N- to C-terminus: Large ribosomal subunit protein uL22 (113 aa).

It belongs to the universal ribosomal protein uL22 family. In terms of assembly, part of the 50S ribosomal subunit.

This protein binds specifically to 23S rRNA; its binding is stimulated by other ribosomal proteins, e.g. L4, L17, and L20. It is important during the early stages of 50S assembly. It makes multiple contacts with different domains of the 23S rRNA in the assembled 50S subunit and ribosome. Functionally, the globular domain of the protein is located near the polypeptide exit tunnel on the outside of the subunit, while an extended beta-hairpin is found that lines the wall of the exit tunnel in the center of the 70S ribosome. This chain is Large ribosomal subunit protein uL22, found in Geobacillus stearothermophilus (Bacillus stearothermophilus).